Reading from the N-terminus, the 127-residue chain is Ribonuclease P protein component (127 aa).

Residues 99–127 (ALSASLRQQLRDGIDRSARRQEPAAERQR) form a disordered region. Over residues 107–127 (QLRDGIDRSARRQEPAAERQR) the composition is skewed to basic and acidic residues.

It belongs to the RnpA family. Consists of a catalytic RNA component (M1 or rnpB) and a protein subunit.

It carries out the reaction Endonucleolytic cleavage of RNA, removing 5'-extranucleotides from tRNA precursor.. In terms of biological role, RNaseP catalyzes the removal of the 5'-leader sequence from pre-tRNA to produce the mature 5'-terminus. It can also cleave other RNA substrates such as 4.5S RNA. The protein component plays an auxiliary but essential role in vivo by binding to the 5'-leader sequence and broadening the substrate specificity of the ribozyme. The protein is Ribonuclease P protein component of Mycobacteroides abscessus (strain ATCC 19977 / DSM 44196 / CCUG 20993 / CIP 104536 / JCM 13569 / NCTC 13031 / TMC 1543 / L948) (Mycobacterium abscessus).